Consider the following 567-residue polypeptide: Dihydroxy-acid dehydratase 3 (567 aa).

Residue Cys57 participates in [2Fe-2S] cluster binding. Residue Asp89 coordinates Mg(2+). Cys130 provides a ligand contact to [2Fe-2S] cluster. Mg(2+)-binding residues include Asp131 and Lys132. At Lys132 the chain carries N6-carboxylysine. Cys202 contacts [2Fe-2S] cluster. Glu454 is a binding site for Mg(2+). The Proton acceptor role is filled by Ser480.

It belongs to the IlvD/Edd family. Homodimer. It depends on [2Fe-2S] cluster as a cofactor. Requires Mg(2+) as cofactor.

The enzyme catalyses (2R)-2,3-dihydroxy-3-methylbutanoate = 3-methyl-2-oxobutanoate + H2O. The catalysed reaction is (2R,3R)-2,3-dihydroxy-3-methylpentanoate = (S)-3-methyl-2-oxopentanoate + H2O. It functions in the pathway amino-acid biosynthesis; L-isoleucine biosynthesis; L-isoleucine from 2-oxobutanoate: step 3/4. Its pathway is amino-acid biosynthesis; L-valine biosynthesis; L-valine from pyruvate: step 3/4. Functions in the biosynthesis of branched-chain amino acids. Catalyzes the dehydration of (2R,3R)-2,3-dihydroxy-3-methylpentanoate (2,3-dihydroxy-3-methylvalerate) into 2-oxo-3-methylpentanoate (2-oxo-3-methylvalerate) and of (2R)-2,3-dihydroxy-3-methylbutanoate (2,3-dihydroxyisovalerate) into 2-oxo-3-methylbutanoate (2-oxoisovalerate), the penultimate precursor to L-isoleucine and L-valine, respectively. This Aromatoleum aromaticum (strain DSM 19018 / LMG 30748 / EbN1) (Azoarcus sp. (strain EbN1)) protein is Dihydroxy-acid dehydratase 3.